The primary structure comprises 346 residues: Protein farnesyltransferase/geranylgeranyltransferase type-1 subunit alpha (346 aa).

PFTA repeat units follow at residues 59–93 (RSTR…ALGV), 94–128 (DLRE…KLGA), 130–164 (AVTN…ALGG), 165–198 (WEDE…RSPL), and 205–239 (MREL…NDTQ).

This sequence belongs to the protein prenyltransferase subunit alpha family. As to quaternary structure, heterodimer of an alpha and a beta subunit. The cofactor is Mg(2+).

It carries out the reaction L-cysteinyl-[protein] + (2E,6E)-farnesyl diphosphate = S-(2E,6E)-farnesyl-L-cysteinyl-[protein] + diphosphate. The catalysed reaction is geranylgeranyl diphosphate + L-cysteinyl-[protein] = S-geranylgeranyl-L-cysteinyl-[protein] + diphosphate. In terms of biological role, essential subunit of both the farnesyltransferase and the geranylgeranyltransferase complex. Contributes to the transfer of a farnesyl or geranylgeranyl moiety from farnesyl or geranylgeranyl diphosphate to a cysteine at the fourth position from the C-terminus of several proteins having the C-terminal sequence Cys-aliphatic-aliphatic-X. This chain is Protein farnesyltransferase/geranylgeranyltransferase type-1 subunit alpha (FTA), found in Solanum lycopersicum (Tomato).